The chain runs to 41 residues: Tachystatin-C (41 aa).

3 disulfides stabilise this stretch: Cys12/Cys28, Cys19/Cys33, and Cys27/Cys38.

In terms of tissue distribution, granular hemocytes, small secretory granules.

Its subcellular location is the secreted. Functionally, binds to chitin. Shows strong activity against E.coli (IC(50) is 1.2 ug/ml). Is also very active against S.aureus (IC(50) is 0.8 ug/ml), C.albicans (IC(50) is 0.9 ug/ml) and P.pastoris (IC(50) is 0.3 ug/ml). Binds to chitin (5.2 uM are required to obtain 50% of binding). Causes hemolysis on sheep erythrocytes, probably by forming ion-permeable pores. The polypeptide is Tachystatin-C (Tachypleus tridentatus (Japanese horseshoe crab)).